The chain runs to 233 residues: Leucyl/phenylalanyl-tRNA--protein transferase (233 aa).

This sequence belongs to the L/F-transferase family.

It is found in the cytoplasm. The catalysed reaction is N-terminal L-lysyl-[protein] + L-leucyl-tRNA(Leu) = N-terminal L-leucyl-L-lysyl-[protein] + tRNA(Leu) + H(+). It catalyses the reaction N-terminal L-arginyl-[protein] + L-leucyl-tRNA(Leu) = N-terminal L-leucyl-L-arginyl-[protein] + tRNA(Leu) + H(+). It carries out the reaction L-phenylalanyl-tRNA(Phe) + an N-terminal L-alpha-aminoacyl-[protein] = an N-terminal L-phenylalanyl-L-alpha-aminoacyl-[protein] + tRNA(Phe). Functionally, functions in the N-end rule pathway of protein degradation where it conjugates Leu, Phe and, less efficiently, Met from aminoacyl-tRNAs to the N-termini of proteins containing an N-terminal arginine or lysine. The sequence is that of Leucyl/phenylalanyl-tRNA--protein transferase from Desulfatibacillum aliphaticivorans.